We begin with the raw amino-acid sequence, 173 residues long: MYLDYLVLGAGASKFNNGDIIATLAIFLVLMFLLKKVAWGPLMGIMQQREELVASEIEAAEKARKESHQFLEEQKSLLKEARTEAQSIVEGAKKQGELQKDEILTAARNEANRLKESALREIESEKEKAIAAVRDEVVSLSVLAASKVLSKEISEADNRALIEETIAKAGEAR.

Residues 20–40 (IIATLAIFLVLMFLLKKVAWG) form a helical membrane-spanning segment.

Belongs to the ATPase B chain family. F-type ATPases have 2 components, F(1) - the catalytic core - and F(0) - the membrane proton channel. F(1) has five subunits: alpha(3), beta(3), gamma(1), delta(1), epsilon(1). F(0) has three main subunits: a(1), b(2) and c(10-14). The alpha and beta chains form an alternating ring which encloses part of the gamma chain. F(1) is attached to F(0) by a central stalk formed by the gamma and epsilon chains, while a peripheral stalk is formed by the delta and b chains.

The protein localises to the cell membrane. F(1)F(0) ATP synthase produces ATP from ADP in the presence of a proton or sodium gradient. F-type ATPases consist of two structural domains, F(1) containing the extramembraneous catalytic core and F(0) containing the membrane proton channel, linked together by a central stalk and a peripheral stalk. During catalysis, ATP synthesis in the catalytic domain of F(1) is coupled via a rotary mechanism of the central stalk subunits to proton translocation. Functionally, component of the F(0) channel, it forms part of the peripheral stalk, linking F(1) to F(0). The polypeptide is ATP synthase subunit b (Lysinibacillus sphaericus (strain C3-41)).